The chain runs to 223 residues: Ribonuclease 3 (223 aa).

The RNase III domain occupies 4-127 (LNRLEEHLGY…LMGAIYLESG (124 aa)). Position 40 (Glu-40) interacts with Mg(2+). Residue Asp-44 is part of the active site. Mg(2+)-binding residues include Asp-113 and Glu-116. Glu-116 is an active-site residue. One can recognise a DRBM domain in the interval 154 to 223 (DYKTTLQEIT…AWKVLQGMNI (70 aa)).

Belongs to the ribonuclease III family. Homodimer. Mg(2+) serves as cofactor.

The protein localises to the cytoplasm. The enzyme catalyses Endonucleolytic cleavage to 5'-phosphomonoester.. In terms of biological role, digests double-stranded RNA. Involved in the processing of primary rRNA transcript to yield the immediate precursors to the large and small rRNAs (23S and 16S). Processes some mRNAs, and tRNAs when they are encoded in the rRNA operon. Processes pre-crRNA and tracrRNA of type II CRISPR loci if present in the organism. In Campylobacter fetus subsp. fetus (strain 82-40), this protein is Ribonuclease 3.